Consider the following 190-residue polypeptide: Segregation and condensation protein B (190 aa).

The protein belongs to the ScpB family. Homodimer. Homodimerization may be required to stabilize the binding of ScpA to the Smc head domains. Component of a cohesin-like complex composed of ScpA, ScpB and the Smc homodimer, in which ScpA and ScpB bind to the head domain of Smc. The presence of the three proteins is required for the association of the complex with DNA.

The protein resides in the cytoplasm. Participates in chromosomal partition during cell division. May act via the formation of a condensin-like complex containing Smc and ScpA that pull DNA away from mid-cell into both cell halves. The protein is Segregation and condensation protein B of Bacillus cereus (strain B4264).